The sequence spans 360 residues: Melanoma-associated antigen B16 (360 aa).

A disordered region spans residues 1–118; it reads MSQKNPEYAA…GNSVIPPDQP (118 aa). Over residues 9–19 the composition is skewed to basic and acidic residues; sequence AADHDHTREEM. Residues 63-98 show a composition bias toward polar residues; the sequence is CSSSQLLTASNQEDPAYETPSTSRGLQHPYVSSSES. Residues 125–324 enclose the MAGE domain; it reads IDGKVNFLVN…TVFPSQYEEA (200 aa). Residues 340-360 are disordered; sequence AGPSSASGESSSDMGSNVPHI. Positions 341–360 are enriched in low complexity; sequence GPSSASGESSSDMGSNVPHI.

This chain is Melanoma-associated antigen B16 (Mageb16), found in Rattus norvegicus (Rat).